Consider the following 359-residue polypeptide: Membrane-bound lytic murein transglycosylase C (359 aa).

A signal peptide spans 1-16 (MKKYLALALIAPLLIS). Cys-17 carries the N-palmitoyl cysteine lipid modification. A lipid anchor (S-diacylglycerol cysteine) is attached at Cys-17.

This sequence belongs to the transglycosylase Slt family.

It localises to the cell outer membrane. It carries out the reaction Exolytic cleavage of the (1-&gt;4)-beta-glycosidic linkage between N-acetylmuramic acid (MurNAc) and N-acetylglucosamine (GlcNAc) residues in peptidoglycan, from either the reducing or the non-reducing ends of the peptidoglycan chains, with concomitant formation of a 1,6-anhydrobond in the MurNAc residue.. In terms of biological role, murein-degrading enzyme. May play a role in recycling of muropeptides during cell elongation and/or cell division. This is Membrane-bound lytic murein transglycosylase C from Escherichia fergusonii (strain ATCC 35469 / DSM 13698 / CCUG 18766 / IAM 14443 / JCM 21226 / LMG 7866 / NBRC 102419 / NCTC 12128 / CDC 0568-73).